Consider the following 810-residue polypeptide: Protein kinase C-binding protein NELL1 (810 aa).

An N-terminal signal peptide occupies residues 1–21; that stretch reads MPMDLILVVWFCVCTARTVVG. Residues asparagine 40, asparagine 53, asparagine 83, asparagine 224, asparagine 294, and asparagine 372 are each glycosylated (N-linked (GlcNAc...) asparagine). The Laminin G-like domain occupies 64–227; the sequence is EREIHAAPHV…TQCPNLNHTC (164 aa). The VWFC 1 domain maps to 271–332; that stretch reads KTCQVSGLLY…IAGQCCKVCR (62 aa). Cystine bridges form between cysteine 395/cysteine 407, cysteine 401/cysteine 416, and cysteine 418/cysteine 432. Residues aspartate 434, isoleucine 435, and glutamate 437 each coordinate Ca(2+). Residues 434-475 enclose the EGF-like 1; calcium-binding domain; the sequence is DIDECAAKMHYCHANTVCVNLPGLYRCDCVPGYIRVDDFSCT. 15 disulfide bridges follow: cysteine 438-cysteine 451, cysteine 445-cysteine 460, cysteine 462-cysteine 474, cysteine 480-cysteine 493, cysteine 487-cysteine 502, cysteine 504-cysteine 515, cysteine 519-cysteine 529, cysteine 523-cysteine 535, cysteine 537-cysteine 546, cysteine 553-cysteine 566, cysteine 560-cysteine 575, cysteine 577-cysteine 594, cysteine 600-cysteine 613, cysteine 607-cysteine 622, and cysteine 624-cysteine 630. Residues asparagine 453, leucine 454, and leucine 457 each coordinate Ca(2+). An EGF-like 2; calcium-binding domain is found at 476–516; sequence EHDECGSGQHNCDENAICTNTVQGHSCTCKPGYVGNGTICR. Asparagine 511 is a glycosylation site (N-linked (GlcNAc...) asparagine). The EGF-like 3 domain occupies 517–547; that stretch reads AFCEEGCRYGGTCVAPNKCVCPSGFTGSHCE. The region spanning 549 to 587 is the EGF-like 4; calcium-binding domain; the sequence is DIDECSEGIIECHNHSRCVNLPGWYHCECRSGFHDDGTY. Asparagine 562 carries an N-linked (GlcNAc...) asparagine glycan. One can recognise an EGF-like 5; calcium-binding domain in the interval 596–631; the sequence is DIDECALRTHTCWNDSACINLAGGFDCLCPSGPSCS. Residue asparagine 609 is glycosylated (N-linked (GlcNAc...) asparagine). The 59-residue stretch at 692–750 folds into the VWFC 2 domain; it reads SQCLDQNGHKLYRSGDNWTHSCQQCRCLEGEVDCWPLTCPNLSCEYTAILEGECCPRCV. N-linked (GlcNAc...) asparagine glycans are attached at residues asparagine 708, asparagine 732, and asparagine 758.

As to quaternary structure, homotrimer. Binds to PKC beta-1. Interacts with ATRAID; the interaction promotes osteoblast cell differentiation and mineralization. Interacts with ROBO3.

It is found in the cytoplasm. Its subcellular location is the nucleus envelope. The protein localises to the secreted. In terms of biological role, plays a role in the control of cell growth and differentiation. Promotes osteoblast cell differentiation and terminal mineralization. This Homo sapiens (Human) protein is Protein kinase C-binding protein NELL1 (NELL1).